Consider the following 188-residue polypeptide: MGVDICHKYDRRVRRTKPKSKDVYLELLVKLYRFLTRRTNSKFNKIILKRLFMSKINRPPMAISKIVRFMKKPTREGRVAVIVGTIVDDPRMWTIPKLTVCALRVTDKARSRILKAGGEIITFDQLALRAPTGKNTVLMQGKRTGREANKHFGPAPGVPHSHTKAHVRSKGRQFERARGRRTSKGYKK.

A disordered region spans residues 147 to 188 (EANKHFGPAPGVPHSHTKAHVRSKGRQFERARGRRTSKGYKK). 2 stretches are compositionally biased toward basic residues: residues 161-171 (SHTKAHVRSKG) and 178-188 (RGRRTSKGYKK).

The protein belongs to the eukaryotic ribosomal protein eL18 family.

It is found in the cytoplasm. The chain is Large ribosomal subunit protein eL18 (RpL18) from Diaphorina citri (Asian citrus psyllid).